The sequence spans 89 residues: Envelope protein US9 (89 aa).

The span at 1 to 10 shows a compositional bias: basic and acidic residues; it reads MTSRPADQDS. A disordered region spans residues 1-21; it reads MTSRPADQDSVRSSASVPLYP. The Intravirion segment spans residues 1-66; sequence MTSRPADQDS…RRRRTRCVGL (66 aa). An Internalization motif motif is present at residues 20–23; it reads YPAA. An acidic region spans residues 29–38; sequence EAYYSESEDE. Phosphoserine; by host CK2 occurs at positions 33 and 35. The chain crosses the membrane as a helical; Signal-anchor for type II membrane protein span at residues 67-87; the sequence is VIACLVVALLSGGFGALLVWL. Over 88 to 89 the chain is Virion surface; the sequence is LR.

Belongs to the alphaherpesvirinae envelope protein US9 family. In terms of processing, phosphorylated on serines within the acidic cluster, possibly by host CK2. Phosphorylation determines whether endocytosed viral US9 traffics to the trans-Golgi network or recycles to the cell membrane.

The protein localises to the virion membrane. It localises to the host Golgi apparatus membrane. The protein resides in the host smooth endoplasmic reticulum membrane. Its subcellular location is the host cell membrane. Its function is as follows. Essential for the anterograde spread of the infection throughout the host nervous system. Together with the gE/gI heterodimer, US9 is involved in the sorting and transport of viral structural components toward axon tips. This chain is Envelope protein US9, found in Homo sapiens (Human).